Here is a 608-residue protein sequence, read N- to C-terminus: Dihydroxyacetone kinase (608 aa).

A DhaK domain is found at 8-357; sequence YKKDLVLSHL…LDHKTSAPGW (350 aa). Substrate contacts are provided by residues 53–56, K105, and D110; that span reads GSGH. The Tele-hemiaminal-histidine intermediate role is filled by H234. The DhaL domain occupies 392-599; it reads KLYADLLESG…LAALISGITD (208 aa). Residues 421 to 424, 467 to 468, 523 to 524, and 584 to 586 each bind ATP; these read DGDC, TS, TL, and DPG.

The protein belongs to the dihydroxyacetone kinase (DAK) family.

It is found in the cytoplasm. It carries out the reaction dihydroxyacetone + ATP = dihydroxyacetone phosphate + ADP + H(+). The catalysed reaction is D-glyceraldehyde + ATP = D-glyceraldehyde 3-phosphate + ADP + H(+). It participates in polyol metabolism; glycerol fermentation; glycerone phosphate from glycerol (oxidative route): step 2/2. Catalyzes both the phosphorylation of dihydroxyacetone and of glyceraldehyde. The protein is Dihydroxyacetone kinase (DAK) of Komagataella pastoris (Yeast).